The sequence spans 165 residues: Ribosome maturation factor RimM (165 aa).

Residues E94–R163 form the PRC barrel domain.

The protein belongs to the RimM family. In terms of assembly, binds ribosomal protein uS19.

It localises to the cytoplasm. Functionally, an accessory protein needed during the final step in the assembly of 30S ribosomal subunit, possibly for assembly of the head region. Essential for efficient processing of 16S rRNA. May be needed both before and after RbfA during the maturation of 16S rRNA. It has affinity for free ribosomal 30S subunits but not for 70S ribosomes. This chain is Ribosome maturation factor RimM, found in Rickettsia akari (strain Hartford).